The primary structure comprises 397 residues: DnaJ protein homolog 1 (397 aa).

The J domain occupies 1–52; the sequence is KNASPDDLKKAYRKAAIKNHPDKGGDPEKFKELAQAYDVLSDPEKREIYDQY. The CR-type zinc-finger motif lies at 114 to 198; that stretch reads GTSKKLSLSR…CKGEKVVQEK (85 aa). CXXCXGXG motif repeat units follow at residues 127–134, 143–150, 170–177, and 186–193; these read CSKCNGKG, CASCQGSG, CNDCKGTG, and CPLCKGEK. The tract at residues 367–397 is disordered; that stretch reads MRRKQHQHAQEAYDEDDEGHGGGQRVQCAQQ. Cysteine 394 bears the Cysteine methyl ester mark. Residue cysteine 394 is the site of S-farnesyl cysteine attachment. Positions 395–397 are cleaved as a propeptide — removed in mature form; sequence AQQ.

It is found in the membrane. Plays a continuous role in plant development probably in the structural organization of compartments. In Allium porrum (Leek), this protein is DnaJ protein homolog 1 (DNAJ1).